A 427-amino-acid polypeptide reads, in one-letter code: UPF0761 membrane protein Plut_1323 (427 aa).

Transmembrane regions (helical) follow at residues 51 to 71, 105 to 125, 147 to 167, 188 to 208, 221 to 241, and 251 to 271; these read LLSI…FAVF, TFTM…VLIS, FTLY…SLAA, LLSL…YLLV, GALV…FYVA, and GALS…VVVL.

It belongs to the UPF0761 family.

It is found in the cell inner membrane. In Chlorobium luteolum (strain DSM 273 / BCRC 81028 / 2530) (Pelodictyon luteolum), this protein is UPF0761 membrane protein Plut_1323.